The sequence spans 213 residues: NADH-quinone oxidoreductase subunit I (213 aa).

2 4Fe-4S ferredoxin-type domains span residues 74–103 (RFIE…METS) and 113–142 (GNYS…HGIE). Positions 83, 86, 89, 93, 122, 125, 128, and 132 each coordinate [4Fe-4S] cluster.

It belongs to the complex I 23 kDa subunit family. In terms of assembly, NDH-1 is composed of 14 different subunits. Subunits NuoA, H, J, K, L, M, N constitute the membrane sector of the complex. The cofactor is [4Fe-4S] cluster.

Its subcellular location is the cell inner membrane. It catalyses the reaction a quinone + NADH + 5 H(+)(in) = a quinol + NAD(+) + 4 H(+)(out). Functionally, NDH-1 shuttles electrons from NADH, via FMN and iron-sulfur (Fe-S) centers, to quinones in the respiratory chain. The immediate electron acceptor for the enzyme in this species is believed to be ubiquinone. Couples the redox reaction to proton translocation (for every two electrons transferred, four hydrogen ions are translocated across the cytoplasmic membrane), and thus conserves the redox energy in a proton gradient. The polypeptide is NADH-quinone oxidoreductase subunit I (Campylobacter jejuni subsp. doylei (strain ATCC BAA-1458 / RM4099 / 269.97)).